A 643-amino-acid polypeptide reads, in one-letter code: Threonine--tRNA ligase (643 aa).

The TGS domain occupies 1–61; that stretch reads MPIITLPDGS…EQDATLEIIT (61 aa). Residues 243–534 are catalytic; that stretch reads DHRKIGKALD…ITEEYAGFFP (292 aa). 3 residues coordinate Zn(2+): cysteine 334, histidine 385, and histidine 511.

Belongs to the class-II aminoacyl-tRNA synthetase family. In terms of assembly, homodimer. It depends on Zn(2+) as a cofactor.

It is found in the cytoplasm. It carries out the reaction tRNA(Thr) + L-threonine + ATP = L-threonyl-tRNA(Thr) + AMP + diphosphate + H(+). In terms of biological role, catalyzes the attachment of threonine to tRNA(Thr) in a two-step reaction: L-threonine is first activated by ATP to form Thr-AMP and then transferred to the acceptor end of tRNA(Thr). Also edits incorrectly charged L-seryl-tRNA(Thr). The polypeptide is Threonine--tRNA ligase (Haemophilus influenzae (strain PittEE)).